A 1053-amino-acid polypeptide reads, in one-letter code: Focal adhesion kinase 1 (1053 aa).

Residues 1-27 (MAAAYLDPNLNHTPSSSAKTHLGTGME) are disordered. A compositionally biased stretch (polar residues) spans 10–19 (LNHTPSSSAK). The region spanning 35–355 (RVLKVFHYFE…GYCRLVNGAT (321 aa)) is the FERM domain. Tyr397 bears the Phosphotyrosine; by autocatalysis mark. At Tyr407 the chain carries Phosphotyrosine. In terms of domain architecture, Protein kinase spans 422–680 (IELGRCIGEG…ELKAQLSTIL (259 aa)). ATP-binding positions include 428–434 (IGEGQFG), Lys454, and 500–502 (ELC). The active-site Proton acceptor is the Asp546. Phosphotyrosine; by SRC is present on residues Tyr576 and Tyr577. The span at 686-697 (QQEERMRMESRR) shows a compositional bias: basic and acidic residues. 2 disordered regions span residues 686-741 (QQEE…QPNH) and 843-892 (RGSI…LASL). The residue at position 863 (Tyr863) is a Phosphotyrosine. Ser911 bears the Phosphoserine mark. Residue Tyr926 is modified to Phosphotyrosine.

The protein belongs to the protein kinase superfamily. Tyr protein kinase family. FAK subfamily. Interacts with ARHGAP26, GRB7, DCC, PIK3R1, PXN and SRC. Interacts with the ARP2/3 complex. Post-translationally, phosphorylated on tyrosine residues upon activation, e.g. upon integrin signaling. Tyr-397 is the major autophosphorylation site, but other kinases can also phosphorylate this residue. Phosphorylation at Tyr-397 promotes interaction with SRC and SRC family members, leading to phosphorylation at Tyr-576, Tyr-577 and at additional tyrosine residues. Isoform 2 is phosphorylated on serine or threonine residues, but apparently not on tyrosine residues.

The protein resides in the cell junction. It is found in the focal adhesion. It localises to the cell membrane. Its subcellular location is the cytoplasm. The protein localises to the perinuclear region. The protein resides in the cell cortex. It is found in the cytoskeleton. It localises to the microtubule organizing center. Its subcellular location is the centrosome. The protein localises to the nucleus. The protein resides in the cilium basal body. It carries out the reaction L-tyrosyl-[protein] + ATP = O-phospho-L-tyrosyl-[protein] + ADP + H(+). Its activity is regulated as follows. Subject to autoinhibition, mediated by interactions between the FERM domain and the kinase domain. Activated by autophosphorylation at Tyr-397. This promotes interaction with SRC and phosphorylation at Tyr-576 and Tyr-577 in the kinase activation loop. Phosphorylation at Tyr-576 and Tyr-577 is required for maximal kinase activity. Inhibited by TAE226. Its function is as follows. Non-receptor protein-tyrosine kinase that plays an essential role in regulating cell migration, adhesion, spreading, reorganization of the actin cytoskeleton, formation and disassembly of focal adhesions and cell protrusions, cell cycle progression, cell proliferation and apoptosis. Required for early embryonic development, embryonic angiogenesis, normal cardiomyocyte migration and proliferation, and normal heart development. Regulates axon growth and neuronal cell migration, axon branching and synapse formation; required for normal development of the nervous system. Plays a role in osteogenesis and differentiation of osteoblasts. Functions in integrin signal transduction, but also in signaling downstream of numerous growth factor receptors, G-protein coupled receptors (GPCR), ephrin receptors, netrin receptors and LDL receptors. Forms multisubunit signaling complexes with SRC and SRC family members upon activation; this leads to the phosphorylation of additional tyrosine residues, creating binding sites for scaffold proteins, effectors and substrates. Regulates numerous signaling pathways. Promotes activation of phosphatidylinositol 3-kinase and the AKT1 signaling cascade. Promotes activation of MAPK1/ERK2, MAPK3/ERK1 and the MAP kinase signaling cascade. Promotes localized and transient activation of guanine nucleotide exchange factors (GEFs) and GTPase-activating proteins (GAPs), and thereby modulates the activity of Rho family GTPases. Signaling via CAS family members mediates activation of RAC1. Regulates P53/TP53 activity and stability. Phosphorylates SRC; this increases SRC kinase activity. Isoform 2 (FRNK) does not contain a kinase domain and inhibits PTK2/FAK1 phosphorylation and signaling. The sequence is that of Focal adhesion kinase 1 (PTK2) from Gallus gallus (Chicken).